A 621-amino-acid polypeptide reads, in one-letter code: F-box/LRR-repeat protein 4 (621 aa).

Position 28 is an asymmetric dimethylarginine (arginine 28). Residues 277–332 (NGYFDKLPYELIQLILNHLTLPDLCRLAQTCKLLSQHCCDPLQYIHLNLQPYWAKL) enclose the F-box domain. LRR repeat units lie at residues 376–397 (ELVR…EVIS), 402–421 (NLQA…AFNH), 427–448 (SLKR…SILN), 452–474 (ELQH…ASMI), 480–501 (KLRT…AELA), 504–524 (CPLL…STGC), 532–558 (LPNL…ACNC), 559–583 (TRLQ…LLES), and 584–609 (CKDL…LNAS).

In terms of assembly, part of a SCF (SKP1-CUL1-F-box) protein ligase complex. Interacts with VCP. Interacts with PPTC7; this interaction promotes destruction of BNIP3 and NIX and mitophagy suppression. In terms of tissue distribution, expressed in heart, kidney, liver, lung, pancreas, and placenta, but not in skeletal muscle.

The protein resides in the cytoplasm. Its subcellular location is the nucleus. It is found in the mitochondrion outer membrane. Its function is as follows. Substrate-recognition component of the mitochondria-localized SCF-FBXL4 ubiquitin E3 ligase complex that plays a role in the restriction of mitophagy by controlling the degradation of BNIP3 and NIX mitophagy receptors. Rescues also mitochondrial injury through reverting hyperactivation of DRP1-mediated mitochondrial fission. In Homo sapiens (Human), this protein is F-box/LRR-repeat protein 4 (FBXL4).